The primary structure comprises 363 residues: Chorismate synthase (363 aa).

NADP(+)-binding residues include Arg-48 and Arg-54. FMN is bound by residues 125-127 (RSS), 237-238 (NA), Gly-277, 292-296 (KPTSS), and Arg-318.

The protein belongs to the chorismate synthase family. Homotetramer. Requires FMNH2 as cofactor.

The enzyme catalyses 5-O-(1-carboxyvinyl)-3-phosphoshikimate = chorismate + phosphate. It participates in metabolic intermediate biosynthesis; chorismate biosynthesis; chorismate from D-erythrose 4-phosphate and phosphoenolpyruvate: step 7/7. Functionally, catalyzes the anti-1,4-elimination of the C-3 phosphate and the C-6 proR hydrogen from 5-enolpyruvylshikimate-3-phosphate (EPSP) to yield chorismate, which is the branch point compound that serves as the starting substrate for the three terminal pathways of aromatic amino acid biosynthesis. This reaction introduces a second double bond into the aromatic ring system. The polypeptide is Chorismate synthase (Pseudomonas syringae pv. syringae (strain B728a)).